The chain runs to 114 residues: Amphinase-3 (114 aa).

The Proton acceptor role is filled by His-15. An N-linked (GlcNAc...) asparagine glycan is attached at Asn-25. 4 cysteine pairs are disulfide-bonded: Cys-26/Cys-79, Cys-41/Cys-85, Cys-59/Cys-100, and Cys-97/Cys-114. Residue 42–46 (KPINT) coordinates substrate. N-linked (GlcNAc...) asparagine glycans are attached at residues Asn-67 and Asn-91. The Proton donor role is filled by His-107.

It belongs to the pancreatic ribonuclease family. Monomer. In terms of processing, there are at least five different forms arising from glycan heterogeneity.

The protein localises to the secreted. In terms of biological role, endonuclease, hydrolyzes highly polymerized RNA, poly(U) and poly(C), and the dinucleotides CpA and UpA. More active towards rCA than rUA or rUG. Has cytotoxic activity against cultured human submaxillary gland carcinoma cells. In Lithobates pipiens (Northern leopard frog), this protein is Amphinase-3.